Here is a 246-residue protein sequence, read N- to C-terminus: Phosphonates import ATP-binding protein PhnC (246 aa).

The region spanning 2–246 (IKFENVSKIY…ILDEVYRKEA (245 aa)) is the ABC transporter domain. 35–42 (GTSGAGKS) contacts ATP.

The protein belongs to the ABC transporter superfamily. Phosphonates importer (TC 3.A.1.9.1) family. The complex is composed of two ATP-binding proteins (PhnC), two transmembrane proteins (PhnE) and a solute-binding protein (PhnD).

It localises to the cell membrane. It catalyses the reaction phosphonate(out) + ATP + H2O = phosphonate(in) + ADP + phosphate + H(+). Its function is as follows. Part of the ABC transporter complex PhnCDE involved in phosphonates import. Responsible for energy coupling to the transport system. The polypeptide is Phosphonates import ATP-binding protein PhnC (Lactococcus lactis subsp. lactis (strain IL1403) (Streptococcus lactis)).